Here is a 135-residue protein sequence, read N- to C-terminus: ATP synthase epsilon chain (135 aa).

Positions 101-122 are disordered; sequence TAVTKLEGQPSTPEKVKAQQLF.

It belongs to the ATPase epsilon chain family. F-type ATPases have 2 components, CF(1) - the catalytic core - and CF(0) - the membrane proton channel. CF(1) has five subunits: alpha(3), beta(3), gamma(1), delta(1), epsilon(1). CF(0) has three main subunits: a, b and c.

The protein resides in the cellular thylakoid membrane. Produces ATP from ADP in the presence of a proton gradient across the membrane. This Synechococcus sp. (strain CC9311) protein is ATP synthase epsilon chain.